Consider the following 121-residue polypeptide: Large ribosomal subunit protein bL19 (121 aa).

Belongs to the bacterial ribosomal protein bL19 family.

In terms of biological role, this protein is located at the 30S-50S ribosomal subunit interface and may play a role in the structure and function of the aminoacyl-tRNA binding site. This is Large ribosomal subunit protein bL19 from Gloeobacter violaceus (strain ATCC 29082 / PCC 7421).